The primary structure comprises 525 residues: Alpha-ketoglutaric semialdehyde dehydrogenase 2 (525 aa).

Residues Lys185, Glu188, and 242-247 (GSRQGG) each bind NAD(+). The Proton acceptor role is filled by Glu266. The active-site Nucleophile is the Cys303. Glu394 is an NAD(+) binding site.

Belongs to the aldehyde dehydrogenase family. In terms of assembly, homodimer.

It carries out the reaction 2,5-dioxopentanoate + NADP(+) + H2O = 2-oxoglutarate + NADPH + 2 H(+). It catalyses the reaction 2,5-dioxopentanoate + NAD(+) + H2O = 2-oxoglutarate + NADH + 2 H(+). Its pathway is carbohydrate acid metabolism; D-glucarate degradation. The protein operates within carbohydrate acid metabolism; galactarate degradation. In terms of biological role, catalyzes the NAD(P)(+)-dependent oxidation of alpha-ketoglutaric semialdehyde (alphaKGSA) to alpha-ketoglutarate. Involved in D-glucarate/D-galactarate metabolism. Prefers NAD(+) to NADP(+) as a cosubstrate. The polypeptide is Alpha-ketoglutaric semialdehyde dehydrogenase 2 (Azospirillum brasilense).